The primary structure comprises 396 residues: NADH-quinone oxidoreductase subunit D (396 aa).

Belongs to the complex I 49 kDa subunit family. NDH-1 is composed of 14 different subunits. Subunits NuoB, C, D, E, F, and G constitute the peripheral sector of the complex.

Its subcellular location is the cell inner membrane. It carries out the reaction a quinone + NADH + 5 H(+)(in) = a quinol + NAD(+) + 4 H(+)(out). In terms of biological role, NDH-1 shuttles electrons from NADH, via FMN and iron-sulfur (Fe-S) centers, to quinones in the respiratory chain. The immediate electron acceptor for the enzyme in this species is believed to be ubiquinone. Couples the redox reaction to proton translocation (for every two electrons transferred, four hydrogen ions are translocated across the cytoplasmic membrane), and thus conserves the redox energy in a proton gradient. The chain is NADH-quinone oxidoreductase subunit D from Mesorhizobium japonicum (strain LMG 29417 / CECT 9101 / MAFF 303099) (Mesorhizobium loti (strain MAFF 303099)).